The sequence spans 278 residues: 4-deoxy-L-threo-5-hexosulose-uronate ketol-isomerase (278 aa).

Zn(2+) is bound by residues His196, His198, Glu203, and His245.

This sequence belongs to the KduI family. Requires Zn(2+) as cofactor.

The enzyme catalyses 5-dehydro-4-deoxy-D-glucuronate = 3-deoxy-D-glycero-2,5-hexodiulosonate. The protein operates within glycan metabolism; pectin degradation; 2-dehydro-3-deoxy-D-gluconate from pectin: step 4/5. Its function is as follows. Catalyzes the isomerization of 5-dehydro-4-deoxy-D-glucuronate to 3-deoxy-D-glycero-2,5-hexodiulosonate. This chain is 4-deoxy-L-threo-5-hexosulose-uronate ketol-isomerase, found in Burkholderia cenocepacia (strain ATCC BAA-245 / DSM 16553 / LMG 16656 / NCTC 13227 / J2315 / CF5610) (Burkholderia cepacia (strain J2315)).